A 157-amino-acid chain; its full sequence is SsrA-binding protein (157 aa).

A disordered region spans residues 130 to 157 (KAEHDKRDTIKEREGKREVERVMKSRHR).

This sequence belongs to the SmpB family.

Its subcellular location is the cytoplasm. Required for rescue of stalled ribosomes mediated by trans-translation. Binds to transfer-messenger RNA (tmRNA), required for stable association of tmRNA with ribosomes. tmRNA and SmpB together mimic tRNA shape, replacing the anticodon stem-loop with SmpB. tmRNA is encoded by the ssrA gene; the 2 termini fold to resemble tRNA(Ala) and it encodes a 'tag peptide', a short internal open reading frame. During trans-translation Ala-aminoacylated tmRNA acts like a tRNA, entering the A-site of stalled ribosomes, displacing the stalled mRNA. The ribosome then switches to translate the ORF on the tmRNA; the nascent peptide is terminated with the 'tag peptide' encoded by the tmRNA and targeted for degradation. The ribosome is freed to recommence translation, which seems to be the essential function of trans-translation. This Acidovorax sp. (strain JS42) protein is SsrA-binding protein.